The following is a 245-amino-acid chain: Orotidine 5'-phosphate decarboxylase (245 aa).

Residues aspartate 22, lysine 44, 71-80, threonine 131, arginine 192, glutamine 201, glycine 221, and arginine 222 contribute to the substrate site; that span reads DLKFHDIPNT. The active-site Proton donor is the lysine 73.

The protein belongs to the OMP decarboxylase family. Type 1 subfamily. In terms of assembly, homodimer.

It carries out the reaction orotidine 5'-phosphate + H(+) = UMP + CO2. The protein operates within pyrimidine metabolism; UMP biosynthesis via de novo pathway; UMP from orotate: step 2/2. Functionally, catalyzes the decarboxylation of orotidine 5'-monophosphate (OMP) to uridine 5'-monophosphate (UMP). The polypeptide is Orotidine 5'-phosphate decarboxylase (Escherichia coli O139:H28 (strain E24377A / ETEC)).